The chain runs to 570 residues: Sulfite reductase [NADPH] hemoprotein beta-component (570 aa).

[4Fe-4S] cluster-binding residues include C434, C440, C479, and C483. C483 contacts siroheme.

It belongs to the nitrite and sulfite reductase 4Fe-4S domain family. In terms of assembly, alpha(8)-beta(8). The alpha component is a flavoprotein, the beta component is a hemoprotein. Siroheme serves as cofactor. It depends on [4Fe-4S] cluster as a cofactor.

The catalysed reaction is hydrogen sulfide + 3 NADP(+) + 3 H2O = sulfite + 3 NADPH + 4 H(+). It functions in the pathway sulfur metabolism; hydrogen sulfide biosynthesis; hydrogen sulfide from sulfite (NADPH route): step 1/1. Component of the sulfite reductase complex that catalyzes the 6-electron reduction of sulfite to sulfide. This is one of several activities required for the biosynthesis of L-cysteine from sulfate. In Shigella flexneri serotype 5b (strain 8401), this protein is Sulfite reductase [NADPH] hemoprotein beta-component.